We begin with the raw amino-acid sequence, 355 residues long: Phenylalanine--tRNA ligase alpha subunit (355 aa).

A Mg(2+)-binding site is contributed by Glu-273.

This sequence belongs to the class-II aminoacyl-tRNA synthetase family. Phe-tRNA synthetase alpha subunit type 1 subfamily. In terms of assembly, tetramer of two alpha and two beta subunits. Mg(2+) is required as a cofactor.

The protein resides in the cytoplasm. It catalyses the reaction tRNA(Phe) + L-phenylalanine + ATP = L-phenylalanyl-tRNA(Phe) + AMP + diphosphate + H(+). In Bifidobacterium longum subsp. infantis (strain ATCC 15697 / DSM 20088 / JCM 1222 / NCTC 11817 / S12), this protein is Phenylalanine--tRNA ligase alpha subunit.